An 80-amino-acid polypeptide reads, in one-letter code: Exodeoxyribonuclease 7 small subunit (80 aa).

It belongs to the XseB family. As to quaternary structure, heterooligomer composed of large and small subunits.

It localises to the cytoplasm. It carries out the reaction Exonucleolytic cleavage in either 5'- to 3'- or 3'- to 5'-direction to yield nucleoside 5'-phosphates.. In terms of biological role, bidirectionally degrades single-stranded DNA into large acid-insoluble oligonucleotides, which are then degraded further into small acid-soluble oligonucleotides. This chain is Exodeoxyribonuclease 7 small subunit, found in Shigella sonnei (strain Ss046).